The sequence spans 635 residues: Leucine aminopeptidase 2-2 (635 aa).

Residues 141–143 (QCQ) and 265–270 (PYGGME) each bind substrate. His294 contributes to the Zn(2+) binding site. The Proton acceptor role is filled by Glu295. Residues His298 and Glu317 each coordinate Zn(2+). Tyr399 acts as the Proton donor in catalysis.

Belongs to the peptidase M1 family. The cofactor is Zn(2+).

It is found in the cytoplasm. The protein resides in the nucleus. The catalysed reaction is an epoxide + H2O = an ethanediol. Aminopeptidase that preferentially cleaves di- and tripeptides. Also has low epoxide hydrolase activity (in vitro). Can hydrolyze the epoxide leukotriene LTA(4) but it forms preferentially 5,6-dihydroxy-7,9,11,14-eicosatetraenoic acid rather than the cytokine leukotriene B(4) as the product compared to the homologous mammalian enzyme (in vitro). The protein is Leucine aminopeptidase 2-2 (LTA4) of Scheffersomyces stipitis (strain ATCC 58785 / CBS 6054 / NBRC 10063 / NRRL Y-11545) (Yeast).